Reading from the N-terminus, the 256-residue chain is Small ribosomal subunit protein eS1 (256 aa).

Positions 1-18 (MAVGKNKRLSKGKKGIKK) are enriched in basic residues. Residues 1–20 (MAVGKNKRLSKGKKGIKKRT) are disordered. Position 2 is an N-acetylalanine; partial (Ala2).

Belongs to the eukaryotic ribosomal protein eS1 family. Component of the small ribosomal subunit. Mature ribosomes consist of a small (40S) and a large (60S) subunit. The 40S subunit contains about 33 different proteins and 1 molecule of RNA (18S). The 60S subunit contains about 49 different proteins and 3 molecules of RNA (25S, 5.8S and 5S).

The protein resides in the cytoplasm. The protein is Small ribosomal subunit protein eS1 (rps1) of Emericella nidulans (strain FGSC A4 / ATCC 38163 / CBS 112.46 / NRRL 194 / M139) (Aspergillus nidulans).